The sequence spans 129 residues: Small ribosomal subunit protein uS13 (129 aa).

Residues 95–114 show a composition bias toward basic residues; sequence NLPVRGQRTKTNARTRRGPR. The tract at residues 95-129 is disordered; that stretch reads NLPVRGQRTKTNARTRRGPRKTVAGRGQKRGATKK.

The protein belongs to the universal ribosomal protein uS13 family. As to quaternary structure, part of the 30S ribosomal subunit. Forms a loose heterodimer with protein S19. Forms two bridges to the 50S subunit in the 70S ribosome.

In terms of biological role, located at the top of the head of the 30S subunit, it contacts several helices of the 16S rRNA. In the 70S ribosome it contacts the 23S rRNA (bridge B1a) and protein L5 of the 50S subunit (bridge B1b), connecting the 2 subunits; these bridges are implicated in subunit movement. Contacts the tRNAs in the A and P-sites. This chain is Small ribosomal subunit protein uS13, found in Dehalococcoides mccartyi (strain ATCC BAA-2100 / JCM 16839 / KCTC 5957 / BAV1).